The primary structure comprises 61 residues: Large ribosomal subunit protein uL30 (61 aa).

The protein belongs to the universal ribosomal protein uL30 family. Part of the 50S ribosomal subunit.

The chain is Large ribosomal subunit protein uL30 from Rhizorhabdus wittichii (strain DSM 6014 / CCUG 31198 / JCM 15750 / NBRC 105917 / EY 4224 / RW1) (Sphingomonas wittichii).